The chain runs to 262 residues: Small ribosomal subunit protein eS4C (262 aa).

Residues 42 to 105 (LPLIVFLRNR…GEHFRLVYDI (64 aa)) enclose the S4 RNA-binding domain. Threonine 194 bears the Phosphothreonine mark.

Belongs to the eukaryotic ribosomal protein eS4 family. As to quaternary structure, component of the small ribosomal subunit (SSU). Mature yeast ribosomes consist of a small (40S) and a large (60S) subunit. The 40S small subunit contains 1 molecule of ribosomal RNA (18S rRNA) and at least 33 different proteins. The large 60S subunit contains 3 rRNA molecules (25S, 5.8S and 5S rRNA) and at least 46 different proteins.

It localises to the cytoplasm. Functionally, component of the ribosome, a large ribonucleoprotein complex responsible for the synthesis of proteins in the cell. The small ribosomal subunit (SSU) binds messenger RNAs (mRNAs) and translates the encoded message by selecting cognate aminoacyl-transfer RNA (tRNA) molecules. The large subunit (LSU) contains the ribosomal catalytic site termed the peptidyl transferase center (PTC), which catalyzes the formation of peptide bonds, thereby polymerizing the amino acids delivered by tRNAs into a polypeptide chain. The nascent polypeptides leave the ribosome through a tunnel in the LSU and interact with protein factors that function in enzymatic processing, targeting, and the membrane insertion of nascent chains at the exit of the ribosomal tunnel. In Schizosaccharomyces pombe (strain 972 / ATCC 24843) (Fission yeast), this protein is Small ribosomal subunit protein eS4C (rps403).